The following is a 158-amino-acid chain: NAD(P)H-quinone oxidoreductase subunit J, chloroplastic (158 aa).

The protein belongs to the complex I 30 kDa subunit family. In terms of assembly, NDH is composed of at least 16 different subunits, 5 of which are encoded in the nucleus.

Its subcellular location is the plastid. The protein resides in the chloroplast thylakoid membrane. It carries out the reaction a plastoquinone + NADH + (n+1) H(+)(in) = a plastoquinol + NAD(+) + n H(+)(out). It catalyses the reaction a plastoquinone + NADPH + (n+1) H(+)(in) = a plastoquinol + NADP(+) + n H(+)(out). Its function is as follows. NDH shuttles electrons from NAD(P)H:plastoquinone, via FMN and iron-sulfur (Fe-S) centers, to quinones in the photosynthetic chain and possibly in a chloroplast respiratory chain. The immediate electron acceptor for the enzyme in this species is believed to be plastoquinone. Couples the redox reaction to proton translocation, and thus conserves the redox energy in a proton gradient. The protein is NAD(P)H-quinone oxidoreductase subunit J, chloroplastic of Solanum bulbocastanum (Wild potato).